We begin with the raw amino-acid sequence, 69 residues long: Beta-defensin 122 (69 aa).

The signal sequence occupies residues 1-19 (MKPFLVTLAVLLLFFQVTA). Cystine bridges form between Cys-26-Cys-53, Cys-33-Cys-47, and Cys-37-Cys-54.

The protein belongs to the beta-defensin family.

It localises to the secreted. Its function is as follows. Has antibacterial activity. In Macaca mulatta (Rhesus macaque), this protein is Beta-defensin 122 (DEFB122).